The following is a 249-amino-acid chain: ATP synthase subunit a 1 (249 aa).

The next 6 helical transmembrane spans lie at 26–46 (FTNV…FLYL), 84–104 (FFPF…LGLF), 114–134 (IIVT…YGFF), 143–163 (LFVP…IEII), 193–213 (FVVS…LPLI), and 216–236 (VAIT…FTVL).

Belongs to the ATPase A chain family. As to quaternary structure, F-type ATPases have 2 components, CF(1) - the catalytic core - and CF(0) - the membrane proton channel. CF(1) has five subunits: alpha(3), beta(3), gamma(1), delta(1), epsilon(1). CF(0) has three main subunits: a(1), b(2) and c(9-12). The alpha and beta chains form an alternating ring which encloses part of the gamma chain. CF(1) is attached to CF(0) by a central stalk formed by the gamma and epsilon chains, while a peripheral stalk is formed by the delta and b chains.

The protein localises to the cell inner membrane. Key component of the proton channel; it plays a direct role in the translocation of protons across the membrane. This Brucella anthropi (strain ATCC 49188 / DSM 6882 / CCUG 24695 / JCM 21032 / LMG 3331 / NBRC 15819 / NCTC 12168 / Alc 37) (Ochrobactrum anthropi) protein is ATP synthase subunit a 1.